A 158-amino-acid chain; its full sequence is Transcription elongation factor GreA (158 aa).

The protein belongs to the GreA/GreB family.

Its function is as follows. Necessary for efficient RNA polymerase transcription elongation past template-encoded arresting sites. The arresting sites in DNA have the property of trapping a certain fraction of elongating RNA polymerases that pass through, resulting in locked ternary complexes. Cleavage of the nascent transcript by cleavage factors such as GreA or GreB allows the resumption of elongation from the new 3'terminus. GreA releases sequences of 2 to 3 nucleotides. This Pseudomonas syringae pv. tomato (strain ATCC BAA-871 / DC3000) protein is Transcription elongation factor GreA.